The chain runs to 354 residues: Fructose-bisphosphate aldolase (354 aa).

S50 is a binding site for D-glyceraldehyde 3-phosphate. The Proton donor role is filled by D83. 4 residues coordinate Zn(2+): H84, D105, E142, and H198. G199 serves as a coordination point for dihydroxyacetone phosphate. H232 contacts Zn(2+). Dihydroxyacetone phosphate-binding positions include 233–235 (GSS) and 275–278 (NIDT).

It belongs to the class II fructose-bisphosphate aldolase family. Zn(2+) serves as cofactor.

The catalysed reaction is beta-D-fructose 1,6-bisphosphate = D-glyceraldehyde 3-phosphate + dihydroxyacetone phosphate. It functions in the pathway carbohydrate degradation; glycolysis; D-glyceraldehyde 3-phosphate and glycerone phosphate from D-glucose: step 4/4. Functionally, catalyzes the aldol condensation of dihydroxyacetone phosphate (DHAP or glycerone-phosphate) with glyceraldehyde 3-phosphate (G3P) to form fructose 1,6-bisphosphate (FBP) in gluconeogenesis and the reverse reaction in glycolysis. In Stutzerimonas stutzeri (Pseudomonas stutzeri), this protein is Fructose-bisphosphate aldolase (fba).